Reading from the N-terminus, the 1060-residue chain is Positive regulator of purine utilization (1060 aa).

A compositionally biased stretch (polar residues) spans 1-15 (MLNPSTSDIHTSPTA). The segment at 1 to 48 (MLNPSTSDIHTSPTAVGNGRKRPHPIADSGSAMPSDPSAQQLPHPANE) is disordered. The segment at residues 67-94 (CNRCRQRKNRCDQRLPRCQACEKAGVRC) is a DNA-binding region (zn(2)-C6 fungal-type). Disordered regions lie at residues 163 to 207 (EIAA…DAED), 251 to 282 (SVPGNSSERGPSRPKERLPHSATGTEGSTTRD), 367 to 391 (AEDQKEGRDHSPSATKRQRLSSRQY), 811 to 862 (VQTS…RFDM), and 877 to 969 (RQGS…PSGM). Composition is skewed to basic and acidic residues over residues 170-182 (SNDKSVRIKKEKN), 189-207 (KASRYDHDPEVKQDSDAED), and 260-269 (GPSRPKERLP). Residues 272–282 (ATGTEGSTTRD) are compositionally biased toward polar residues. The span at 367 to 377 (AEDQKEGRDHS) shows a compositional bias: basic and acidic residues. Residues 811-831 (VQTSTSGSRQFNATQSRSRPY) show a composition bias toward polar residues. Composition is skewed to low complexity over residues 832 to 859 (SRQQAEQRQRQSASRRQLQMRQSRPLPR) and 930 to 952 (PRYYYNNSPQQSGSPGSVVAASG).

Its subcellular location is the nucleus. Mediates the induction of a number of unlinked genes involved in purine utilization. Binds to the consensus sequence 5'-TCGGNNNNNNCCGA-3'. The polypeptide is Positive regulator of purine utilization (uaY) (Emericella nidulans (strain FGSC A4 / ATCC 38163 / CBS 112.46 / NRRL 194 / M139) (Aspergillus nidulans)).